The sequence spans 292 residues: Protease HtpX homolog (292 aa).

Transmembrane regions (helical) follow at residues Thr-7–Gly-27 and Gly-29–Ser-49. His-131 lines the Zn(2+) pocket. The active site involves Glu-132. Residue His-135 participates in Zn(2+) binding. 2 consecutive transmembrane segments (helical) span residues Ala-148–Gly-168 and Leu-178–Ile-198. Glu-203 is a binding site for Zn(2+).

Belongs to the peptidase M48B family. The cofactor is Zn(2+).

It localises to the cell inner membrane. This is Protease HtpX homolog from Paracoccus denitrificans (strain Pd 1222).